Here is a 746-residue protein sequence, read N- to C-terminus: Protein psiN (746 aa).

The first 23 residues, 1 to 23 (MGNINKKLFYFLIQLITILIVLS), serve as a signal peptide directing secretion. Over 24 to 679 (DDSYNSLLPL…KCQSAAVKAA (656 aa)) the chain is Extracellular. Asn-97 and Asn-124 each carry an N-linked (GlcNAc...) asparagine glycan. In terms of domain architecture, PA14 spans 125–276 (VTSDDPRIYS…YDYCGVCEGM (152 aa)). 7 N-linked (GlcNAc...) asparagine glycosylation sites follow: Asn-319, Asn-353, Asn-380, Asn-477, Asn-553, Asn-628, and Asn-654. Residues 680–700 (VGVGAGAAAGIAIGGAIALGL) form a helical membrane-spanning segment. Residues 701–746 (AAFGGKRGYDAWKSSRDNQIQTSSENPLYNPNPNQGDNPLYAANNS) are Cytoplasmic-facing. A disordered region spans residues 714 to 746 (SSRDNQIQTSSENPLYNPNPNQGDNPLYAANNS). Positions 717 to 746 (DNQIQTSSENPLYNPNPNQGDNPLYAANNS) are enriched in polar residues.

It belongs to the prespore-cell-inducing factor family.

It is found in the membrane. This chain is Protein psiN (psiN), found in Dictyostelium discoideum (Social amoeba).